The following is a 317-amino-acid chain: MKSGGNTNTKLILVHPYIQKQTSTNRLWLLAFVSFFTIAFLLTLLYTTDSIISSKNNSATVSSAVNSAVTTATISQLPTTAINAMLHYASRSNDSYHMSYGEMKSISDVLRRCSPPCNLLVFGLTHETLLWKSLNHNGRTVFIEENRYYAAYFEEIHPEIEVFDVQYTTKAREARELVSAVKEAARNECRPVQNLLFSDCKLGLNDLPNHVYDVDWDVILVDGPRGDGGDVPGRMSSIFTAAVLARSKKGGNPKTHVFVHDYYRDVERLCGDEFLCRENLVESNDLLAHYVLEKMDKNSTQFCRGRKKKRSVSSPSA.

The helical transmembrane segment at 27–47 (LWLLAFVSFFTIAFLLTLLYT) threads the bilayer.

As to expression, expressed in roots, rosette leaves, stems and siliques. Expressed in the xylem.

It localises to the golgi apparatus membrane. Its function is as follows. Required for xylan biosynthesis, but not directly involved in catalyzing the addition of sugars to the growing polymer. This is Protein IRX15-LIKE (IRX15-L) from Arabidopsis thaliana (Mouse-ear cress).